Reading from the N-terminus, the 193-residue chain is Adenylate kinase (193 aa).

11 to 16 (GAGKGT) serves as a coordination point for ATP. The tract at residues 31–60 (STGDLLRAEVKAQTPLGCQAKVYMDAGELV) is NMP. Residues Thr32, Arg37, 58–60 (ELV), 85–88 (GFPR), and Gln92 contribute to the AMP site. Positions 126–136 (ARGKEQGRSDD) are LID. Arg127 contributes to the ATP binding site. AMP-binding residues include Arg133 and Arg145. Gln173 is a binding site for ATP.

It belongs to the adenylate kinase family. Monomer.

Its subcellular location is the cytoplasm. The catalysed reaction is AMP + ATP = 2 ADP. Its pathway is purine metabolism; AMP biosynthesis via salvage pathway; AMP from ADP: step 1/1. Catalyzes the reversible transfer of the terminal phosphate group between ATP and AMP. Plays an important role in cellular energy homeostasis and in adenine nucleotide metabolism. The protein is Adenylate kinase of Synechococcus sp. (strain JA-2-3B'a(2-13)) (Cyanobacteria bacterium Yellowstone B-Prime).